A 146-amino-acid polypeptide reads, in one-letter code: Snaclec 1 (146 aa).

An N-terminal signal peptide occupies residues 1–23 (MGRFIFISFGLLVVFLSLSGTEA). 3 cysteine pairs are disulfide-bonded: C25–C36, C53–C142, and C119–C134. Residues 32–143 (YEGHCYRVFD…CRNYGHFVCK (112 aa)) enclose the C-type lectin domain.

The protein belongs to the snaclec family. Heterodimer; disulfide-linked. Expressed by the venom gland.

The protein resides in the secreted. Its function is as follows. Interferes with one step of hemostasis (modulation of platelet aggregation, or coagulation cascade, for example). The polypeptide is Snaclec 1 (Bitis arietans (African puff adder)).